The primary structure comprises 285 residues: Bifunctional protein FolD 2 (285 aa).

NADP(+) contacts are provided by residues 164 to 166, S189, and V230; that span reads GRS.

The protein belongs to the tetrahydrofolate dehydrogenase/cyclohydrolase family. As to quaternary structure, homodimer.

The catalysed reaction is (6R)-5,10-methylene-5,6,7,8-tetrahydrofolate + NADP(+) = (6R)-5,10-methenyltetrahydrofolate + NADPH. It catalyses the reaction (6R)-5,10-methenyltetrahydrofolate + H2O = (6R)-10-formyltetrahydrofolate + H(+). The protein operates within one-carbon metabolism; tetrahydrofolate interconversion. In terms of biological role, catalyzes the oxidation of 5,10-methylenetetrahydrofolate to 5,10-methenyltetrahydrofolate and then the hydrolysis of 5,10-methenyltetrahydrofolate to 10-formyltetrahydrofolate. In Geobacter sulfurreducens (strain ATCC 51573 / DSM 12127 / PCA), this protein is Bifunctional protein FolD 2.